The primary structure comprises 401 residues: Chalcone synthase 4 (401 aa).

Residue Cys168 is part of the active site.

The protein belongs to the thiolase-like superfamily. Chalcone/stilbene synthases family.

It catalyses the reaction (E)-4-coumaroyl-CoA + 3 malonyl-CoA + 3 H(+) = 2',4,4',6'-tetrahydroxychalcone + 3 CO2 + 4 CoA. It functions in the pathway secondary metabolite biosynthesis; flavonoid biosynthesis. The primary product of this enzyme is 4,2',4',6'-tetrahydroxychalcone (also termed naringenin-chalcone or chalcone) which can under specific conditions spontaneously isomerize into naringenin. The protein is Chalcone synthase 4 (CHS4) of Sorghum bicolor (Sorghum).